The chain runs to 76 residues: Secreted RxLR effector protein 31 (76 aa).

Residues 1 to 24 form the signal peptide; that stretch reads MRHCACLFHLFLIGFLCNVYFSAC. Residues 49-64 carry the RxLR-dEER motif; that stretch reads RILRANDSEFLLTEER. A glycan (N-linked (GlcNAc...) asparagine) is linked at Asn54.

The protein belongs to the RxLR effector family.

It is found in the secreted. It localises to the host nucleus. The protein resides in the host cytoplasm. In terms of biological role, secreted effector that dos not suppress the host cell death induced by cell death-inducing proteins. In Plasmopara viticola (Downy mildew of grapevine), this protein is Secreted RxLR effector protein 31.